Reading from the N-terminus, the 520-residue chain is MTQTAQPDTVLIVDFGSQVTQLIARRVREAGVYCEIVPFQSADAGFKRLQPKAVILSGSPASTVDEGSPRAPQIIFDSGVPVFGICYGQQTMCMQLGGKVESGHHREFGRAFLDVNKDCALFEGLWSSGSRHQVWMSHGDRVTALPDGFEVVATSSNAPYAFIADEKRKYYGVQFHPEVVHTPDGAKLIGNFIHNIAGIKGDWSMSAYRAKAVQAIRDQVGDKRVICALSGGVDSSVAALLIHEAVGDQLTCILVDHGLMRKDEAANVVAMFSEHYNLHLLHVDASERFIGELEGVSDPETKRKIIGRLFIETFEEEAKKLGGADFLGQGTLYPDVIESVSFTGGPSVTIKSHHNVGGLPERMNMQLVEPLRELFKDEVRALGKELGLPDSFIGRHPFPGPGLAIRCPGGITREKLEILREADAIYLDEIRKAGLYDAIWQAFAVLLPVQTVGVMGDGRTYEFVCALRAVTSVDGMTADFYHYDMEFLGRAATRIINEVRGINRVVYDVTSKPPGTIEWE.

The Glutamine amidotransferase type-1 domain occupies Thr-9–Asp-202. Residue Cys-86 is the Nucleophile of the active site. Active-site residues include His-176 and Glu-178. Residues Trp-203 to Arg-395 enclose the GMPS ATP-PPase domain. Ser-230–Ser-236 is an ATP binding site.

Homodimer.

It carries out the reaction XMP + L-glutamine + ATP + H2O = GMP + L-glutamate + AMP + diphosphate + 2 H(+). It functions in the pathway purine metabolism; GMP biosynthesis; GMP from XMP (L-Gln route): step 1/1. Catalyzes the synthesis of GMP from XMP. This is GMP synthase [glutamine-hydrolyzing] from Rhizobium rhizogenes (strain K84 / ATCC BAA-868) (Agrobacterium radiobacter).